Here is a 315-residue protein sequence, read N- to C-terminus: Ester hydrolase C11orf54 (315 aa).

Zn(2+) is bound by residues His-266, His-268, and His-278.

In terms of assembly, monomer. Zn(2+) serves as cofactor.

The protein localises to the nucleus. Its subcellular location is the cytoplasm. Exhibits ester hydrolase activity on the substrate p-nitrophenyl acetate, in vitro. Regulates DNA damage and repair by regulating HIF1A degradation via chaperone-mediated autophagy (CMA). Functionally, probably non-functional. The chain is Ester hydrolase C11orf54 (C11orf54) from Homo sapiens (Human).